Reading from the N-terminus, the 356-residue chain is Holliday junction branch migration complex subunit RuvB (356 aa).

The tract at residues 4 to 190 (TDKLAAERII…FGIVARLEFY (187 aa)) is large ATPase domain (RuvB-L). ATP is bound by residues Leu29, Arg30, Gly71, Lys74, Thr75, Thr76, 137 to 139 (EDY), Arg180, Tyr190, and Arg227. Position 75 (Thr75) interacts with Mg(2+). The tract at residues 191–261 (DAEQLSRIVR…VADAALAMLD (71 aa)) is small ATPAse domain (RuvB-S). Residues 264-356 (PVGFDLMDRK…NLWDTPDAER (93 aa)) form a head domain (RuvB-H) region. 3 residues coordinate DNA: Arg300, Arg319, and Arg324.

It belongs to the RuvB family. As to quaternary structure, homohexamer. Forms an RuvA(8)-RuvB(12)-Holliday junction (HJ) complex. HJ DNA is sandwiched between 2 RuvA tetramers; dsDNA enters through RuvA and exits via RuvB. An RuvB hexamer assembles on each DNA strand where it exits the tetramer. Each RuvB hexamer is contacted by two RuvA subunits (via domain III) on 2 adjacent RuvB subunits; this complex drives branch migration. In the full resolvosome a probable DNA-RuvA(4)-RuvB(12)-RuvC(2) complex forms which resolves the HJ.

It localises to the cytoplasm. The catalysed reaction is ATP + H2O = ADP + phosphate + H(+). Functionally, the RuvA-RuvB-RuvC complex processes Holliday junction (HJ) DNA during genetic recombination and DNA repair, while the RuvA-RuvB complex plays an important role in the rescue of blocked DNA replication forks via replication fork reversal (RFR). RuvA specifically binds to HJ cruciform DNA, conferring on it an open structure. The RuvB hexamer acts as an ATP-dependent pump, pulling dsDNA into and through the RuvAB complex. RuvB forms 2 homohexamers on either side of HJ DNA bound by 1 or 2 RuvA tetramers; 4 subunits per hexamer contact DNA at a time. Coordinated motions by a converter formed by DNA-disengaged RuvB subunits stimulates ATP hydrolysis and nucleotide exchange. Immobilization of the converter enables RuvB to convert the ATP-contained energy into a lever motion, pulling 2 nucleotides of DNA out of the RuvA tetramer per ATP hydrolyzed, thus driving DNA branch migration. The RuvB motors rotate together with the DNA substrate, which together with the progressing nucleotide cycle form the mechanistic basis for DNA recombination by continuous HJ branch migration. Branch migration allows RuvC to scan DNA until it finds its consensus sequence, where it cleaves and resolves cruciform DNA. This chain is Holliday junction branch migration complex subunit RuvB, found in Burkholderia thailandensis (strain ATCC 700388 / DSM 13276 / CCUG 48851 / CIP 106301 / E264).